The chain runs to 341 residues: UDP-3-O-acylglucosamine N-acyltransferase (341 aa).

The active-site Proton acceptor is the His239.

It belongs to the transferase hexapeptide repeat family. LpxD subfamily. In terms of assembly, homotrimer.

The catalysed reaction is a UDP-3-O-[(3R)-3-hydroxyacyl]-alpha-D-glucosamine + a (3R)-hydroxyacyl-[ACP] = a UDP-2-N,3-O-bis[(3R)-3-hydroxyacyl]-alpha-D-glucosamine + holo-[ACP] + H(+). The protein operates within bacterial outer membrane biogenesis; LPS lipid A biosynthesis. In terms of biological role, catalyzes the N-acylation of UDP-3-O-acylglucosamine using 3-hydroxyacyl-ACP as the acyl donor. Is involved in the biosynthesis of lipid A, a phosphorylated glycolipid that anchors the lipopolysaccharide to the outer membrane of the cell. The chain is UDP-3-O-acylglucosamine N-acyltransferase from Shewanella sp. (strain MR-7).